We begin with the raw amino-acid sequence, 91 residues long: MDFLTMCMLAAGFGMAIGAFGTGIGQGLAVKSAVEGVSRNPGASGKILTTMMIGLAMIESLAIYVLVVCLIILFANPYKDVAIKLAETVAK.

A run of 2 helical transmembrane segments spans residues 4 to 24 and 53 to 73; these read LTMC…GTGI and IGLA…LIIL.

The protein belongs to the ATPase C chain family. In terms of assembly, F-type ATPases have 2 components, F(1) - the catalytic core - and F(0) - the membrane proton channel. F(1) has five subunits: alpha(3), beta(3), gamma(1), delta(1), epsilon(1). F(0) has three main subunits: a(1), b(2) and c(10-14). The alpha and beta chains form an alternating ring which encloses part of the gamma chain. F(1) is attached to F(0) by a central stalk formed by the gamma and epsilon chains, while a peripheral stalk is formed by the delta and b chains.

It localises to the cell inner membrane. In terms of biological role, f(1)F(0) ATP synthase produces ATP from ADP in the presence of a proton or sodium gradient. F-type ATPases consist of two structural domains, F(1) containing the extramembraneous catalytic core and F(0) containing the membrane proton channel, linked together by a central stalk and a peripheral stalk. During catalysis, ATP synthesis in the catalytic domain of F(1) is coupled via a rotary mechanism of the central stalk subunits to proton translocation. Its function is as follows. Key component of the F(0) channel; it plays a direct role in translocation across the membrane. A homomeric c-ring of between 10-14 subunits forms the central stalk rotor element with the F(1) delta and epsilon subunits. This Geobacter metallireducens (strain ATCC 53774 / DSM 7210 / GS-15) protein is ATP synthase subunit c.